A 127-amino-acid chain; its full sequence is Modulator protein MzrA (127 aa).

Over 1–10 the chain is Cytoplasmic; the sequence is MGLQNMTLRR. Residues 11–31 form a helical membrane-spanning segment; sequence FTLSMSALLLLCALLWLWAAL. Residues 32-127 are Periplasmic-facing; it reads EQQESSLAIR…RLRDAPHRLG (96 aa).

Belongs to the MzrA family. Interacts with EnvZ.

It is found in the cell inner membrane. Functionally, modulates the activity of the EnvZ/OmpR two-component regulatory system, probably by directly modulating EnvZ enzymatic activity and increasing stability of phosphorylated OmpR. The chain is Modulator protein MzrA from Enterobacter lignolyticus (strain SCF1).